A 185-amino-acid chain; its full sequence is Iron-sulfur assembly protein 2 (185 aa).

Cysteine 89, cysteine 175, and cysteine 177 together coordinate Fe cation.

The protein belongs to the HesB/IscA family.

Its subcellular location is the mitochondrion matrix. Involved in the assembly of mitochondrial and cytoplasmic iron-sulfur proteins. Probably involved in the binding of an intermediate of Fe/S cluster assembly. In Saccharomyces cerevisiae (strain ATCC 204508 / S288c) (Baker's yeast), this protein is Iron-sulfur assembly protein 2 (ISA2).